A 511-amino-acid polypeptide reads, in one-letter code: Histidine ammonia-lyase (511 aa).

Residues 142–144 (ASG) constitute a cross-link (5-imidazolinone (Ala-Gly)). Ser143 carries the post-translational modification 2,3-didehydroalanine (Ser).

Belongs to the PAL/histidase family. In terms of processing, contains an active site 4-methylidene-imidazol-5-one (MIO), which is formed autocatalytically by cyclization and dehydration of residues Ala-Ser-Gly.

Its subcellular location is the cytoplasm. The enzyme catalyses L-histidine = trans-urocanate + NH4(+). The protein operates within amino-acid degradation; L-histidine degradation into L-glutamate; N-formimidoyl-L-glutamate from L-histidine: step 1/3. This chain is Histidine ammonia-lyase, found in Brucella suis biovar 1 (strain 1330).